The sequence spans 166 residues: Large ribosomal subunit protein uL10 (166 aa).

The protein belongs to the universal ribosomal protein uL10 family. In terms of assembly, part of the ribosomal stalk of the 50S ribosomal subunit. The N-terminus interacts with L11 and the large rRNA to form the base of the stalk. The C-terminus forms an elongated spine to which L12 dimers bind in a sequential fashion forming a multimeric L10(L12)X complex.

In terms of biological role, forms part of the ribosomal stalk, playing a central role in the interaction of the ribosome with GTP-bound translation factors. This Shewanella denitrificans (strain OS217 / ATCC BAA-1090 / DSM 15013) protein is Large ribosomal subunit protein uL10.